We begin with the raw amino-acid sequence, 341 residues long: UDP-3-O-acylglucosamine N-acyltransferase (341 aa).

The Proton acceptor role is filled by H239.

This sequence belongs to the transferase hexapeptide repeat family. LpxD subfamily. As to quaternary structure, homotrimer.

It catalyses the reaction a UDP-3-O-[(3R)-3-hydroxyacyl]-alpha-D-glucosamine + a (3R)-hydroxyacyl-[ACP] = a UDP-2-N,3-O-bis[(3R)-3-hydroxyacyl]-alpha-D-glucosamine + holo-[ACP] + H(+). It functions in the pathway bacterial outer membrane biogenesis; LPS lipid A biosynthesis. Its function is as follows. Catalyzes the N-acylation of UDP-3-O-acylglucosamine using 3-hydroxyacyl-ACP as the acyl donor. Is involved in the biosynthesis of lipid A, a phosphorylated glycolipid that anchors the lipopolysaccharide to the outer membrane of the cell. This chain is UDP-3-O-acylglucosamine N-acyltransferase, found in Shewanella sp. (strain MR-4).